Here is a 455-residue protein sequence, read N- to C-terminus: Glutamyl-tRNA(Gln) amidotransferase subunit A (455 aa).

Active-site charge relay system residues include Lys74 and Ser149. The active-site Acyl-ester intermediate is Ser173.

It belongs to the amidase family. GatA subfamily. In terms of assembly, heterotrimer of A, B and C subunits.

It carries out the reaction L-glutamyl-tRNA(Gln) + L-glutamine + ATP + H2O = L-glutaminyl-tRNA(Gln) + L-glutamate + ADP + phosphate + H(+). Its function is as follows. Allows the formation of correctly charged Gln-tRNA(Gln) through the transamidation of misacylated Glu-tRNA(Gln) in organisms which lack glutaminyl-tRNA synthetase. The reaction takes place in the presence of glutamine and ATP through an activated gamma-phospho-Glu-tRNA(Gln). In Methanosphaera stadtmanae (strain ATCC 43021 / DSM 3091 / JCM 11832 / MCB-3), this protein is Glutamyl-tRNA(Gln) amidotransferase subunit A.